The sequence spans 400 residues: NADH-quinone oxidoreductase subunit D (400 aa).

This sequence belongs to the complex I 49 kDa subunit family. In terms of assembly, NDH-1 is composed of 14 different subunits. Subunits NuoB, C, D, E, F, and G constitute the peripheral sector of the complex.

It is found in the cell inner membrane. It carries out the reaction a quinone + NADH + 5 H(+)(in) = a quinol + NAD(+) + 4 H(+)(out). In terms of biological role, NDH-1 shuttles electrons from NADH, via FMN and iron-sulfur (Fe-S) centers, to quinones in the respiratory chain. The immediate electron acceptor for the enzyme in this species is believed to be menaquinone. Couples the redox reaction to proton translocation (for every two electrons transferred, four hydrogen ions are translocated across the cytoplasmic membrane), and thus conserves the redox energy in a proton gradient. The sequence is that of NADH-quinone oxidoreductase subunit D from Prosthecochloris aestuarii (strain DSM 271 / SK 413).